A 355-amino-acid chain; its full sequence is SH3 domain-containing protein Dlish (355 aa).

3 consecutive SH3 domains span residues 57-117, 183-243, and 287-352; these read SPDS…PCNT, EPSG…PADS, and YHGT…PPAM.

As to quaternary structure, interacts with dachs (via C-terminus); the interaction is direct. Interacts (via N-terminus including SH3 domain 1) with palmitoyltransferase app; this leads to palmitoylation of Dlish by app. Also interacts with dco, ft, ft-regulated E3 ubiquitin ligase Fbxl7, F-box protein slmb and SCF E3 ubiquitin-protein ligase complex component Cul1. In terms of processing, palmitoylated by app.

Its subcellular location is the cytoplasm. The protein resides in the cell cortex. Its function is as follows. Required for the apical cell cortex localization, total cellular level and full activity of dachs. This chain is SH3 domain-containing protein Dlish, found in Drosophila melanogaster (Fruit fly).